We begin with the raw amino-acid sequence, 527 residues long: Coproporphyrinogen III oxidase (527 aa).

The segment covering 1–14 (MSTTDRVTTPTPTV) has biased composition (low complexity). The disordered stretch occupies residues 1 to 23 (MSTTDRVTTPTPTVSGTDAPGPD). Residues 33 to 38 (GGGITG), 56 to 57 (ES), K64, and 78 to 81 (GPDS) contribute to the FAD site. The tract at residues 231-267 (RRAARQRAAQNNAQQNSSHQNSTGQNNSAGTRGPAAS) is disordered. Residues 236 to 252 (QRAAQNNAQQNSSHQNS) are compositionally biased toward low complexity. Residues V300, W448, and 487–489 (VGL) each bind FAD.

Belongs to the protoporphyrinogen/coproporphyrinogen oxidase family. Coproporphyrinogen III oxidase subfamily. Requires FAD as cofactor.

Its subcellular location is the cytoplasm. It catalyses the reaction coproporphyrinogen III + 3 O2 = coproporphyrin III + 3 H2O2. It participates in porphyrin-containing compound metabolism; protoheme biosynthesis. In terms of biological role, involved in coproporphyrin-dependent heme b biosynthesis. Catalyzes the oxidation of coproporphyrinogen III to coproporphyrin III. This Propionibacterium freudenreichii subsp. freudenreichii protein is Coproporphyrinogen III oxidase.